Consider the following 204-residue polypeptide: Cytochrome c biogenesis ATP-binding export protein CcmA (204 aa).

Residues 2 to 203 (LEADNLECVR…PAGTVRELRL (202 aa)) form the ABC transporter domain. An ATP-binding site is contributed by 34–41 (GRNGAGKT).

This sequence belongs to the ABC transporter superfamily. CcmA exporter (TC 3.A.1.107) family. The complex is composed of two ATP-binding proteins (CcmA) and two transmembrane proteins (CcmB).

It is found in the cell inner membrane. It catalyses the reaction heme b(in) + ATP + H2O = heme b(out) + ADP + phosphate + H(+). Its function is as follows. Part of the ABC transporter complex CcmAB involved in the biogenesis of c-type cytochromes; once thought to export heme, this seems not to be the case, but its exact role is uncertain. Responsible for energy coupling to the transport system. The protein is Cytochrome c biogenesis ATP-binding export protein CcmA of Dechloromonas aromatica (strain RCB).